The sequence spans 635 residues: Ligand-gated ion channel 4 (635 aa).

Positions 1-24 (MIICYSCLTVSILLTIKFVPCRFA) are cleaved as a signal peptide. The Extracellular segment spans residues 25 to 324 (GIEHQNTKSR…IHMHRRPLFY (300 aa)). N-linked (GlcNAc...) asparagine glycosylation is found at asparagine 46, asparagine 139, asparagine 177, and asparagine 225. Cysteine 238 and cysteine 252 are oxidised to a cystine. N-linked (GlcNAc...) asparagine glycosylation is present at asparagine 282. 3 consecutive transmembrane segments (helical) span residues 325 to 345 (VFNH…GFLM), 355 to 375 (MIIT…ESIP), and 381 to 401 (VPLI…ATCV). The Cytoplasmic portion of the chain corresponds to 402–599 (NVITLNMHRN…QQLASVVDRL (198 aa)). Residues 600–620 (LLCLFCTATLFTIICLLIVPV) traverse the membrane as a helical segment. Asparagine 625 carries N-linked (GlcNAc...) asparagine glycosylation.

The protein belongs to the ligand-gated ion channel (TC 1.A.9) family.

Its subcellular location is the postsynaptic cell membrane. It localises to the cell membrane. In terms of biological role, possible acetylcholine receptor. The sequence is that of Ligand-gated ion channel 4 (lgc-4) from Caenorhabditis elegans.